The sequence spans 1010 residues: MRFFISHLVTLCFIFCVADSTHFSEEGNKGYGPVFEEQPIDTIYPEESSDGQVSMNCRARAVPFPTYKWKLNNWDIDLTKDRYSMVGGRLVISNPEKSRDAGKYVCVVSNIFGTVRSSEATLSFGYLDPFPPEEHYEVKVREGVGAVLLCEPPYHYPDDLSYRWLLNEFPVFIALDRRRFVSQTNGNLYIANVEASDKGNYSCFVSSPSITKSVFSKFIPLIPQADRAKVYPADIKVKFKDTYALLGQNVTLECFALGNPVPELRWSKYLEPMPATAEISMSGAVLKIFNIQYEDEGLYECEAENYKGKDKHQARVYVQASPEWVEHINDTEKDIGSDLYWPCVATGKPIPTIRWLKNGVSFRKGELRIQGLTFEDAGMYQCIAENAHGIIYANAELKIVASPPTFELNPMKKKILAAKGGRVIIECKPKAAPKPKFSWSKGTELLVNGSRIHIWDDGSLEIINVTKLDEGRYTCFAENNRGKANSTGVLEMTEATRITLAPLNVDVTVGENATMQCIASHDPTLDLTFIWSLNGFVIDFEKEHEHYERNVMIKSNGELLIKNVQLRHAGRYTCTAQTIVDNSSASADLVVRGPPGPPGGIRIEEIRDTAVALTWSRGTDNHSPISKYTIQSKTFLSEEWKDAKTEPSDIEGNMESARVIDLIPWMEYEFRIIATNTLGTGEPSMPSQRIRTEGAPPNVAPSDVGGGGGSNRELTITWMPLSREYHYGNNFGYIVAFKPFGEKEWRRVTVTNPEIGRYVHKDESMPPSTQYQVKVKAFNSKGDGPFSLTAVIYSAQDAPTEVPTDVSVKVLSSSEISVSWHHVTEKSVEGYQIRYWAAHDKEAAAQRVQVSNQEYSTKLENLKPNTRYHIDVSAFNSAGYGPPSRTIDIITRKAPPSQRPRIISSVRSGSRYIITWDHVKAMSNESAVEGYKVLYRPDGQHEGKLFSTGKHTIEVPVPSDGEYVVEVRAHSEGGDGEVAQIKISGATAGVPTLLLGLVLPALGVLAYSGF.

The first 19 residues, 1-19 (MRFFISHLVTLCFIFCVAD), serve as a signal peptide directing secretion. Ig-like C2-type domains lie at 33-123 (PVFE…ATLS), 132-215 (PEEH…KSVF), 232-317 (PADI…ARVY), 322-398 (PEWV…AELK), 404-491 (PTFE…GVLE), and 496-592 (TRIT…LVVR). Intrachain disulfides connect Cys57/Cys106 and Cys150/Cys203. N-linked (GlcNAc...) asparagine glycans are attached at residues Asn200 and Asn249. Cys254 and Cys301 are joined by a disulfide. The N-linked (GlcNAc...) asparagine glycan is linked to Asn329. 2 cysteine pairs are disulfide-bonded: Cys343–Cys382 and Cys427–Cys475. Asn448, Asn464, Asn485, and Asn512 each carry an N-linked (GlcNAc...) asparagine glycan. A disulfide bond links Cys517 and Cys574. N-linked (GlcNAc...) asparagine glycosylation occurs at Asn582. Fibronectin type-III domains are found at residues 597-695 (PPGG…TEGA), 700-797 (APSD…SAQD), 802-897 (VPTD…APPS), and 899-990 (RPRI…TAGV). Residues 679-689 (GTGEPSMPSQR) are compositionally biased toward polar residues. The disordered stretch occupies residues 679–708 (GTGEPSMPSQRIRTEGAPPNVAPSDVGGGG). N-linked (GlcNAc...) asparagine glycosylation occurs at Asn924. Ser984 is lipidated: GPI-anchor amidated serine. The propeptide at 985-1010 (GATAGVPTLLLGLVLPALGVLAYSGF) is removed in mature form.

This sequence belongs to the immunoglobulin superfamily. Contactin family. In terms of assembly, interacts with TNR.

The protein localises to the cell membrane. Mediates cell surface interactions during nervous system development. Interaction with TNR enhances the neurite outgrowth. This Gallus gallus (Chicken) protein is Contactin-1 (CNTN1).